Here is a 156-residue protein sequence, read N- to C-terminus: Ribosome maturation factor RimP (156 aa).

This sequence belongs to the RimP family.

Its subcellular location is the cytoplasm. Functionally, required for maturation of 30S ribosomal subunits. This is Ribosome maturation factor RimP from Bacillus thuringiensis (strain Al Hakam).